Here is a 101-residue protein sequence, read N- to C-terminus: Small ribosomal subunit protein uS10 (101 aa).

This sequence belongs to the universal ribosomal protein uS10 family. Part of the 30S ribosomal subunit.

Functionally, involved in the binding of tRNA to the ribosomes. This is Small ribosomal subunit protein uS10 from Mycoplasmopsis synoviae (strain 53) (Mycoplasma synoviae).